Consider the following 145-residue polypeptide: Phospholipase A2 phospholipin (145 aa).

The first 15 residues, 1–15 (MVDLARRCSGSTEGR), serve as a signal peptide directing secretion. 3 residues coordinate Ca(2+): W24, G26, and G28. 5 disulfide bridges follow: C25–C46, C45–C84, C52–C77, C75–C116, and C121–C132. H49 is an active-site residue. Residue D50 participates in Ca(2+) binding. Residues 124 to 128 (KRSGR) constitute a propeptide that is removed on maturation.

The protein belongs to the phospholipase A2 family. Group III subfamily. In terms of assembly, heterodimer composed of a small subunit and a large subunit; disulfid-linked. It depends on Ca(2+) as a cofactor. As to expression, expressed by the venom gland.

It localises to the secreted. It carries out the reaction a 1,2-diacyl-sn-glycero-3-phosphocholine + H2O = a 1-acyl-sn-glycero-3-phosphocholine + a fatty acid + H(+). Its function is as follows. Scorpion venom phospholipase A2 (PLA2) that contains enzymatic activity, but does not inhibit ryanodine receptors in contrary to imperatoxin-1, another heterodimer of P.imperator venom. PLA2 catalyzes the calcium-dependent hydrolysis of the 2-acyl groups in 3-sn-phosphoglycerides. The chain is Phospholipase A2 phospholipin from Pandinus imperator (Emperor scorpion).